The following is a 96-amino-acid chain: Small ribosomal subunit protein bS16m (96 aa).

The protein belongs to the bacterial ribosomal protein bS16 family. Component of the mitochondrial small ribosomal subunit (mt-SSU). Mature yeast 74S mitochondrial ribosomes consist of a small (37S) and a large (54S) subunit. The 37S small subunit contains a 15S ribosomal RNA (15S mt-rRNA) and at least 32 different proteins. The 54S large subunit contains a 21S rRNA (21S mt-rRNA) and at least 45 different proteins.

It localises to the mitochondrion. Its function is as follows. Component of the mitochondrial ribosome (mitoribosome), a dedicated translation machinery responsible for the synthesis of mitochondrial genome-encoded proteins, including at least some of the essential transmembrane subunits of the mitochondrial respiratory chain. The mitoribosomes are attached to the mitochondrial inner membrane and translation products are cotranslationally integrated into the membrane. The protein is Small ribosomal subunit protein bS16m (mrps16) of Schizosaccharomyces pombe (strain 972 / ATCC 24843) (Fission yeast).